The primary structure comprises 768 residues: DNA replication licensing factor MCM3 homolog 2 (768 aa).

The MCM domain maps to T290–A497. G340 to S347 serves as a coordination point for ATP. Positions S472 to D475 match the Arginine finger motif. The span at E661 to A670 shows a compositional bias: basic and acidic residues. The disordered stretch occupies residues E661–D689. The segment covering A672–S682 has biased composition (gly residues).

This sequence belongs to the MCM family.

It localises to the nucleus. The enzyme catalyses ATP + H2O = ADP + phosphate + H(+). Its function is as follows. Acts as a factor that allows the DNA to undergo a single round of replication per cell cycle. Required for DNA replication and cell proliferation. May act as a component of the MCM complex which is the putative replicative helicase of the replication licensing system in eukaryotic cells. This is DNA replication licensing factor MCM3 homolog 2 (ROA2) from Zea mays (Maize).